Here is a 67-residue protein sequence, read N- to C-terminus: Large ribosomal subunit protein bL32 (67 aa).

Residues 1 to 19 (MAVPKRKMSRANTRARRAQ) are compositionally biased toward basic residues. The segment at 1 to 20 (MAVPKRKMSRANTRARRAQW) is disordered.

It belongs to the bacterial ribosomal protein bL32 family.

The polypeptide is Large ribosomal subunit protein bL32 (Paenarthrobacter aurescens (strain TC1)).